A 1331-amino-acid chain; its full sequence is Xanthine dehydrogenase/oxidase (1331 aa).

Residues 4–91 enclose the 2Fe-2S ferredoxin-type domain; the sequence is DELVFFVNGK…HVAVTTVEGI (88 aa). Residues Cys-43, Cys-48, Cys-51, Cys-73, Cys-113, Cys-116, Cys-148, and Cys-150 each contribute to the [2Fe-2S] cluster site. The FAD-binding PCMH-type domain occupies 229-412; it reads FEGERVTWIQ…LSIEIPYSRE (184 aa). Residues 257 to 264, Phe-335, 345 to 349, Asp-358, Leu-402, and Lys-420 contribute to the FAD site; these read LVVGNTEI and SIGGN. Cys-534 and Cys-991 form a disulfide bridge. Positions 766 and 797 each coordinate Mo-molybdopterin. 2 residues coordinate substrate: Glu-801 and Arg-879. Arg-911 provides a ligand contact to Mo-molybdopterin. The substrate site is built by Phe-913 and Thr-1009. Ala-1078 lines the Mo-molybdopterin pocket. Catalysis depends on Glu-1260, which acts as the Proton acceptor.

The protein belongs to the xanthine dehydrogenase family. Homodimer. Interacts with BTN1A1. Requires FAD as cofactor. The cofactor is Mo-molybdopterin. It depends on [2Fe-2S] cluster as a cofactor. In terms of processing, subject to partial proteolysis; this alters the enzyme from the dehydrogenase form (D) to the oxidase form (O). Post-translationally, contains sulfhydryl groups that are easily oxidized (in vitro); this alters the enzyme from the dehydrogenase form (D) to the oxidase form (O).

The protein resides in the cytoplasm. It is found in the peroxisome. Its subcellular location is the secreted. It catalyses the reaction xanthine + NAD(+) + H2O = urate + NADH + H(+). It carries out the reaction hypoxanthine + NAD(+) + H2O = xanthine + NADH + H(+). The catalysed reaction is xanthine + O2 + H2O = urate + H2O2. Can be converted from the dehydrogenase form (D) to the oxidase form (O) irreversibly by proteolysis or reversibly through the oxidation of sulfhydryl groups. Functionally, key enzyme in purine degradation. Catalyzes the oxidation of hypoxanthine to xanthine. Catalyzes the oxidation of xanthine to uric acid. Contributes to the generation of reactive oxygen species. This Felis catus (Cat) protein is Xanthine dehydrogenase/oxidase (XDH).